Here is a 262-residue protein sequence, read N- to C-terminus: Cytochrome c oxidase subunit 3 (262 aa).

6 helical membrane passes run 39–59 (YTMTLFILGNVITILTMYQWW), 83–103 (GMILFIVSEVFFFISFFWAFF), 120–140 (VGIAAFNPFQIPLLNTAILLA), 163–183 (GLFFTIVLGVYFTILQAYEYI), 201–221 (ATGFHGLHVLIGTTFLLICFL), and 240–260 (AWYWHFVDVVWLFLYITIYWW).

Belongs to the cytochrome c oxidase subunit 3 family. In terms of assembly, component of the cytochrome c oxidase (complex IV, CIV), a multisubunit enzyme composed of a catalytic core of 3 subunits and several supernumerary subunits. The complex exists as a monomer or a dimer and forms supercomplexes (SCs) in the inner mitochondrial membrane with ubiquinol-cytochrome c oxidoreductase (cytochrome b-c1 complex, complex III, CIII).

It localises to the mitochondrion inner membrane. The catalysed reaction is 4 Fe(II)-[cytochrome c] + O2 + 8 H(+)(in) = 4 Fe(III)-[cytochrome c] + 2 H2O + 4 H(+)(out). Functionally, component of the cytochrome c oxidase, the last enzyme in the mitochondrial electron transport chain which drives oxidative phosphorylation. The respiratory chain contains 3 multisubunit complexes succinate dehydrogenase (complex II, CII), ubiquinol-cytochrome c oxidoreductase (cytochrome b-c1 complex, complex III, CIII) and cytochrome c oxidase (complex IV, CIV), that cooperate to transfer electrons derived from NADH and succinate to molecular oxygen, creating an electrochemical gradient over the inner membrane that drives transmembrane transport and the ATP synthase. Cytochrome c oxidase is the component of the respiratory chain that catalyzes the reduction of oxygen to water. Electrons originating from reduced cytochrome c in the intermembrane space (IMS) are transferred via the dinuclear copper A center (CU(A)) of subunit 2 and heme A of subunit 1 to the active site in subunit 1, a binuclear center (BNC) formed by heme A3 and copper B (CU(B)). The BNC reduces molecular oxygen to 2 water molecules using 4 electrons from cytochrome c in the IMS and 4 protons from the mitochondrial matrix. This chain is Cytochrome c oxidase subunit 3 (COIII), found in Anopheles gambiae (African malaria mosquito).